The chain runs to 362 residues: GTP cyclohydrolase FolE2 (362 aa).

The protein belongs to the GTP cyclohydrolase IV family.

It catalyses the reaction GTP + H2O = 7,8-dihydroneopterin 3'-triphosphate + formate + H(+). The protein operates within cofactor biosynthesis; 7,8-dihydroneopterin triphosphate biosynthesis; 7,8-dihydroneopterin triphosphate from GTP: step 1/1. Converts GTP to 7,8-dihydroneopterin triphosphate. This Jannaschia sp. (strain CCS1) protein is GTP cyclohydrolase FolE2.